We begin with the raw amino-acid sequence, 45 residues long: Unknown protein from spots 23/28/205 of 2D-PAGE of thylakoid (45 aa).

Its subcellular location is the plastid. It localises to the chloroplast thylakoid. The sequence is that of Unknown protein from spots 23/28/205 of 2D-PAGE of thylakoid from Pisum sativum (Garden pea).